The chain runs to 462 residues: tRNA modification GTPase MnmE (462 aa).

3 residues coordinate (6S)-5-formyl-5,6,7,8-tetrahydrofolate: Arg-27, Glu-89, and Arg-128. In terms of domain architecture, TrmE-type G spans 223–383 (GLKIAIVGRP…LEAAILAAVG (161 aa)). Asn-233 serves as a coordination point for K(+). GTP is bound by residues 233 to 238 (NVGKSS), 252 to 258 (TDLPGTT), and 277 to 280 (DTAG). Residue Ser-237 participates in Mg(2+) binding. The K(+) site is built by Thr-252, Leu-254, and Thr-257. Thr-258 is a binding site for Mg(2+). Residue Lys-462 coordinates (6S)-5-formyl-5,6,7,8-tetrahydrofolate.

The protein belongs to the TRAFAC class TrmE-Era-EngA-EngB-Septin-like GTPase superfamily. TrmE GTPase family. Homodimer. Heterotetramer of two MnmE and two MnmG subunits. K(+) is required as a cofactor.

It localises to the cytoplasm. Exhibits a very high intrinsic GTPase hydrolysis rate. Involved in the addition of a carboxymethylaminomethyl (cmnm) group at the wobble position (U34) of certain tRNAs, forming tRNA-cmnm(5)s(2)U34. This is tRNA modification GTPase MnmE from Synechococcus elongatus (strain ATCC 33912 / PCC 7942 / FACHB-805) (Anacystis nidulans R2).